The sequence spans 324 residues: Membrane protein UL8 (324 aa).

Residues 36–138 (ILESIIYVSG…LWYNLTVKPK (103 aa)) form an immunoglobulin V-like domain region. The helical transmembrane segment at 278-298 (THYSWMLIIAIILIIFIIICL) threads the bilayer.

Belongs to the RL11 family. In terms of processing, highly glycosylated.

The protein localises to the host cell membrane. Functionally, plays a role in the inhibition of pro-inflammatory cytokine production. This effect is mediated by the conserved Ig-like domain. The polypeptide is Membrane protein UL8 (UL8) (Homo sapiens (Human)).